Here is a 384-residue protein sequence, read N- to C-terminus: MKNICILGATGSIGTQTLEVIREEKENLKLYAASANKSSEKIISIIEEFEPKYVSMTDKEAFLKVKEFCMKNNKNTEVLYGIEGMNTIASLDKVDIVLTSVVGMIGLEPTLKAIRNKKDIALANKETLVVAGEIIKKEAHENKVNILPVDSEHGAIFQCLLGNLKGDINKIHLTASGGPFRGKKREELENVTVEQALKHPNWNMGKKISIDSATLMNKGLEVIEAHFLFDVDYEDIEVVVHPESIIHSMVEYKDGSVIAQLASPDMKLPIQYALNYPIRKDRVIEKLNLFEIEKLTFYKPDLKTFKCLDLAYRAGKIGGMMPTILNSSNEYAVELFLNKKIGFLEIPKIIEECMKKFYTKEEQSVEKIIHMDKIIGEYIREKYN.

Residues Thr10, Gly11, Ser12, Ile13, Lys37, and Asn124 each contribute to the NADPH site. 1-deoxy-D-xylulose 5-phosphate is bound at residue Lys125. Position 126 (Glu126) interacts with NADPH. Mn(2+) is bound at residue Asp150. 1-deoxy-D-xylulose 5-phosphate contacts are provided by Ser151, Glu152, Ser176, and His199. Glu152 is a Mn(2+) binding site. Gly205 lines the NADPH pocket. The 1-deoxy-D-xylulose 5-phosphate site is built by Ser212, Asn217, Lys218, and Glu221. Glu221 contributes to the Mn(2+) binding site.

Belongs to the DXR family. The cofactor is Mg(2+). Mn(2+) serves as cofactor.

It catalyses the reaction 2-C-methyl-D-erythritol 4-phosphate + NADP(+) = 1-deoxy-D-xylulose 5-phosphate + NADPH + H(+). It participates in isoprenoid biosynthesis; isopentenyl diphosphate biosynthesis via DXP pathway; isopentenyl diphosphate from 1-deoxy-D-xylulose 5-phosphate: step 1/6. Its function is as follows. Catalyzes the NADPH-dependent rearrangement and reduction of 1-deoxy-D-xylulose-5-phosphate (DXP) to 2-C-methyl-D-erythritol 4-phosphate (MEP). The sequence is that of 1-deoxy-D-xylulose 5-phosphate reductoisomerase from Clostridium tetani (strain Massachusetts / E88).